Consider the following 673-residue polypeptide: Zinc finger protein 16 (673 aa).

A compositionally biased stretch (basic and acidic residues) spans 1–10 (MPSLRTRREE). The disordered stretch occupies residues 1–42 (MPSLRTRREEAEMELSAPGPSPWTPAPQARVSDAPAVTHPGS). Residues 62 to 210 (YQQPDCDTRT…GVPTAESPLI (149 aa)) are necessary for transcription activation. The C2H2-type 1; degenerate zinc-finger motif lies at 209–231 (LICNECGKTFRGNPDLIQRQIVH). A C2H2-type 2; degenerate zinc finger spans residues 237-259 (FMCDDCGKTFSQNSVLKNRHXSH). Residue Lys-253 forms a Glycyl lysine isopeptide (Lys-Gly) (interchain with G-Cter in SUMO2) linkage. 7 consecutive C2H2-type zinc fingers follow at residues 284–306 (YTCT…QKSH), 312–334 (YECN…QRIH), 340–362 (YVCS…HRTH), 368–390 (FECG…QRVH), 396–418 (YECN…HRVH), 424–446 (YKCS…RRIH), and 452–474 (HVCN…QIIH). A required for nuclear localization region spans residues 332-364 (RIHSGEKPYVCSECGKAFRRSSNLIKHHRTHTG). Residues 464–494 (SSVLRKHQIIHTGEKPYRCSVCGKAFSHSSA) form a required for nuclear localization region. At Lys-478 the chain carries N6-acetyllysine. C2H2-type zinc fingers lie at residues 480-502 (YRCS…QGVH), 508-530 (YACH…QRVH), 536-558 (YECT…QRIH), 564-586 (HECN…QKVH), 592-614 (YTCV…QIIH), 620-642 (YKCS…QRIH), and 648-670 (YDCA…QLIH).

The protein belongs to the krueppel C2H2-type zinc-finger protein family. In terms of assembly, interacts with INCA1; the interaction inhibits INCA1 activity and induces the cell cycle process.

The protein localises to the nucleus. Acts as a transcriptional activator. Promotes cell proliferation by facilitating the cell cycle phase transition from the S to G2/M phase. Involved in both the hemin- and phorbol myristate acetate (PMA)-induced erythroid and megakaryocytic differentiation, respectively. Also plays a role as an inhibitor of cell apoptosis. In Pan paniscus (Pygmy chimpanzee), this protein is Zinc finger protein 16 (ZNF16).